Consider the following 392-residue polypeptide: N-acetylneuraminate epimerase (392 aa).

A signal peptide spans 1–35 (MTQIYHQYKKKLSTKVILLSALTLCITFSLPYANA). Kelch repeat units follow at residues 56–100 (HLYV…VALS), 102–155 (KLYV…TTLN), 157–192 (TQALLLGGVNKAIFDGYFTDLAAAGGNETQKNAVVN), 193–238 (AYFD…TAKK), 241–290 (LILI…LAGA), 312–361 (QQFN…QDKD), and 363–392 (VILLGGETSDGVATSAVTQLSWQGGKLHLE). Residue E247 is the Proton acceptor of the active site.

The protein belongs to the NanM family. As to quaternary structure, homodimer.

Its subcellular location is the periplasm. It catalyses the reaction N-acetyl-alpha-neuraminate = N-acetyl-beta-neuraminate. In terms of biological role, converts alpha-N-acetylneuranimic acid (Neu5Ac) to the beta-anomer, accelerating the equilibrium between the alpha- and beta-anomers. Probably facilitates sialidase-negative bacteria to compete successfully for limited amounts of extracellular Neu5Ac, which is likely taken up in the beta-anomer. In addition, the rapid removal of sialic acid from solution might be advantageous to the bacterium to damp down host responses. This is N-acetylneuraminate epimerase from Yersinia enterocolitica serotype O:8 / biotype 1B (strain NCTC 13174 / 8081).